The sequence spans 915 residues: Metabotropic glutamate receptor 7 (915 aa).

The N-terminal stretch at 1–34 (MVQLGKLLRVLTLMKFPCCVLEVLLCVLAAAARG) is a signal peptide. Over 35–590 (QEMYAPHSIR…IIKLEWHSPW (556 aa)) the chain is Extracellular. Cysteines 67 and 109 form a disulfide. A glycan (N-linked (GlcNAc...) asparagine) is linked at Asn-98. L-glutamate is bound by residues Ser-159, 180 to 182 (AST), Tyr-230, and Asp-314. 7 disulfides stabilise this stretch: Cys-249–Cys-541, Cys-374–Cys-390, Cys-430–Cys-437, Cys-523–Cys-542, Cys-527–Cys-545, Cys-548–Cys-560, and Cys-563–Cys-576. Lys-407 is a binding site for L-glutamate. Asn-458 and Asn-486 each carry an N-linked (GlcNAc...) asparagine glycan. Asn-572 carries an N-linked (GlcNAc...) asparagine glycan. The chain crosses the membrane as a helical span at residues 591–615 (AVIPVFLAMLGIIATIFVMATFIRY). Topologically, residues 616 to 627 (NDTPIVRASGRE) are cytoplasmic. Residues 628 to 648 (LSYVLLTGIFLCYIITFLMIA) form a helical membrane-spanning segment. Over 649–654 (KPDVAV) the chain is Extracellular. A helical membrane pass occupies residues 655 to 675 (CSFRRVFLGLGMCISYAALLT). At 676–702 (KTNRIYRIFEQGKKSVTAPRLISPTSQ) the chain is on the cytoplasmic side. The chain crosses the membrane as a helical span at residues 703–723 (LAITSSLISVQLLGVFIWFGV). Topologically, residues 724–753 (DPPNIIIDYDEHKTMNPEQARGVLKCDITD) are extracellular. The chain crosses the membrane as a helical span at residues 754–775 (LQIICSLGYSILLMVTCTVYAI). Residues 776–788 (KTRGVPENFNEAK) are Cytoplasmic-facing. The chain crosses the membrane as a helical span at residues 789 to 810 (PIGFTMYTTCIVWLAFIPIFFG). The Extracellular segment spans residues 811-825 (TAQSAEKLYIQTTTL). A helical transmembrane segment spans residues 826-850 (TISMNLSASVALGMLYMPKVYIIIF). Over 851-915 (HPELNVQKRK…KYVSYNNLVI (65 aa)) the chain is Cytoplasmic. The segment at 874–895 (SRLSHKPSDRPNGEAKTELCEN) is disordered. A compositionally biased stretch (basic and acidic residues) spans 879 to 892 (KPSDRPNGEAKTEL). The residue at position 900 (Ser-900) is a Phosphoserine.

This sequence belongs to the G-protein coupled receptor 3 family. In terms of assembly, homodimer. Interacts with PICK1.

Its subcellular location is the cell membrane. Functionally, G-protein coupled receptor activated by glutamate that regulates axon outgrowth through the MAPK-cAMP-PKA signaling pathway during neuronal development. Ligand binding causes a conformation change that triggers signaling via guanine nucleotide-binding proteins (G proteins) and modulates the activity of downstream effectors, such as adenylate cyclase that it inhibits. This Mus musculus (Mouse) protein is Metabotropic glutamate receptor 7 (Grm7).